The chain runs to 357 residues: UPF0283 membrane protein HS_0596 (357 aa).

Helical transmembrane passes span 67-87, 96-116, and 213-233; these read LMAT…QWLV, IAFV…GAII, and AVES…MFFI.

Belongs to the UPF0283 family.

It is found in the cell inner membrane. The sequence is that of UPF0283 membrane protein HS_0596 from Histophilus somni (strain 129Pt) (Haemophilus somnus).